The following is a 288-amino-acid chain: Phosphate import ATP-binding protein PstB (288 aa).

The 242-residue stretch at 42-283 (IRDLNFYYEN…PKEKKTRDYI (242 aa)) folds into the ABC transporter domain. An ATP-binding site is contributed by 74–81 (GPSGCGKS).

Belongs to the ABC transporter superfamily. Phosphate importer (TC 3.A.1.7) family. As to quaternary structure, the complex is composed of two ATP-binding proteins (PstB), two transmembrane proteins (PstC and PstA) and a solute-binding protein (PstS).

Its subcellular location is the cell membrane. The enzyme catalyses phosphate(out) + ATP + H2O = ADP + 2 phosphate(in) + H(+). Functionally, part of the ABC transporter complex PstSACB involved in phosphate import. Responsible for energy coupling to the transport system. The chain is Phosphate import ATP-binding protein PstB from Malacoplasma penetrans (strain HF-2) (Mycoplasma penetrans).